Consider the following 505-residue polypeptide: DNA primase large subunit (505 aa).

Residues 253–270 (LSHSYTGQDYSTQKNTGK) form an interdomain linker region. Positions 266-503 (KNTGKISLDQ…LEMDLEGLEE (238 aa)) are interacts with PRIM1. Positions 287, 367, 384, and 424 each coordinate [4Fe-4S] cluster. The RNA:DNA duplex binding stretch occupies residues 300–442 (HLRHGGRMQY…NVDDCGFSLN (143 aa)). The interval 463 to 486 (KEISQPETPQHKPSTQKTRDAASA) is disordered. The segment covering 467–478 (QPETPQHKPSTQ) has biased composition (polar residues). Thr-470 is subject to Phosphothreonine.

Belongs to the eukaryotic-type primase large subunit family. Heterodimer of a catalytic subunit PRIM1 and a regulatory subunit PRIM2, also known as the DNA primase complex. Interacts via (C-terminus) with PRIM1. Component of the alpha DNA polymerase complex (also known as the alpha DNA polymerase-primase complex) consisting of four subunits: the catalytic subunit POLA1, the regulatory subunit POLA2, and the primase complex subunits PRIM1 and PRIM2 respectively. Within the complex, POLA1 directly interacts with PRIM2. [4Fe-4S] cluster is required as a cofactor.

Its function is as follows. Regulatory subunit of the DNA primase complex and component of the DNA polymerase alpha complex (also known as the alpha DNA polymerase-primase complex) which play an essential role in the initiation of DNA synthesis. During the S phase of the cell cycle, the DNA polymerase alpha complex (composed of a catalytic subunit POLA1, an accessory subunit POLA2 and two primase subunits, the catalytic subunit PRIM1 and the regulatory subunit PRIM2) is recruited to DNA at the replicative forks via direct interactions with MCM10 and WDHD1. The primase subunit of the polymerase alpha complex initiates DNA synthesis by oligomerising short RNA primers on both leading and lagging strands. These primers are initially extended by the polymerase alpha catalytic subunit and subsequently transferred to polymerase delta and polymerase epsilon for processive synthesis on the lagging and leading strand, respectively. In the primase complex, both subunits are necessary for the initial di-nucleotide formation, but the extension of the primer depends only on the catalytic subunit. Binds RNA:DNA duplex and coordinates the catalytic activities of PRIM1 and POLA2 during primase-to-polymerase switch. The protein is DNA primase large subunit (Prim2) of Mus musculus (Mouse).